The following is a 306-amino-acid chain: 3-methyl-2-oxobutanoate hydroxymethyltransferase (306 aa).

Positions 53 and 96 each coordinate Mg(2+). Residues Asp-53–Ser-54, Asp-96, and Lys-126 contribute to the 3-methyl-2-oxobutanoate site. Glu-128 is a Mg(2+) binding site. Glu-195 (proton acceptor) is an active-site residue.

The protein belongs to the PanB family. In terms of assembly, homodecamer; pentamer of dimers. Mg(2+) serves as cofactor.

It is found in the cytoplasm. It catalyses the reaction 3-methyl-2-oxobutanoate + (6R)-5,10-methylene-5,6,7,8-tetrahydrofolate + H2O = 2-dehydropantoate + (6S)-5,6,7,8-tetrahydrofolate. It functions in the pathway cofactor biosynthesis; (R)-pantothenate biosynthesis; (R)-pantoate from 3-methyl-2-oxobutanoate: step 1/2. Its function is as follows. Catalyzes the reversible reaction in which hydroxymethyl group from 5,10-methylenetetrahydrofolate is transferred onto alpha-ketoisovalerate to form ketopantoate. This is 3-methyl-2-oxobutanoate hydroxymethyltransferase from Anaeromyxobacter sp. (strain K).